A 279-amino-acid polypeptide reads, in one-letter code: Four and a half LIM domains protein 2 (279 aa).

The segment at 7–31 (CHHCNESLFGKKYILREESPYCVVC) adopts a C4-type zinc-finger fold. LIM zinc-binding domains follow at residues 40 to 92 (CEEC…CTDC), 101 to 153 (CQEC…CVPC), and 162 to 212 (CVQC…CLNC). K78 participates in a covalent cross-link: Glycyl lysine isopeptide (Lys-Gly) (interchain with G-Cter in SUMO2). Glycyl lysine isopeptide (Lys-Gly) (interchain with G-Cter in SUMO2) cross-links involve residues K167 and K220. The LIM zinc-binding 4 domain maps to 221–275 (CAGCTNPISGLGGTKYISFEERQWHNDCFNCKKCSLSLVGRGFLTERDDILCPDC). The residue at position 238 (S238) is a Phosphoserine.

As to quaternary structure, interacts with ZNF638 and TTN/titin. Interacts with E4F1. Interacts with GRB7. Interacts with SIRT1 and FOXO1. Interacts with CEFIP. Interacts with calcineurin. Interacts with FOXK1. As to expression, expressed in skeletal muscle and heart.

Its subcellular location is the cytoplasm. It is found in the nucleus. The protein localises to the myofibril. The protein resides in the sarcomere. It localises to the z line. May function as a molecular transmitter linking various signaling pathways to transcriptional regulation. Negatively regulates the transcriptional repressor E4F1 and may function in cell growth. Inhibits the transcriptional activity of FOXO1 and its apoptotic function by enhancing the interaction of FOXO1 with SIRT1 and FOXO1 deacetylation. Negatively regulates the calcineurin/NFAT signaling pathway in cardiomyocytes. This Homo sapiens (Human) protein is Four and a half LIM domains protein 2 (FHL2).